The chain runs to 441 residues: Phenylalanine-4-hydroxylase (441 aa).

An ACT domain is found at 23–102 (FSISKGSDKI…KATTLQESSN (80 aa)). Fe cation contacts are provided by His273, His278, and Glu318.

This sequence belongs to the biopterin-dependent aromatic amino acid hydroxylase family. In terms of assembly, homotetramer. The cofactor is Fe(2+).

It catalyses the reaction (6R)-L-erythro-5,6,7,8-tetrahydrobiopterin + L-phenylalanine + O2 = (4aS,6R)-4a-hydroxy-L-erythro-5,6,7,8-tetrahydrobiopterin + L-tyrosine. It carries out the reaction (6R)-L-erythro-5,6,7,8-tetrahydrobiopterin + L-tryptophan + O2 = 5-hydroxy-L-tryptophan + (4aS,6R)-4a-hydroxy-L-erythro-5,6,7,8-tetrahydrobiopterin. Its pathway is amino-acid degradation; L-phenylalanine degradation; acetoacetate and fumarate from L-phenylalanine: step 1/6. Catalyzes the hydroxylation of L-phenylalanine. Hydroxylates L-tryptophan to 5-hydroxy-L-tryptophan but does not hydroxylate L-tyrosine to L-DOPA. It uses D-threo-tetrahydrodictyopterin (DH4), also known as dictyoperin, as a cofactor. The chain is Phenylalanine-4-hydroxylase (pah) from Dictyostelium discoideum (Social amoeba).